A 66-amino-acid polypeptide reads, in one-letter code: Beta-mammal toxin Cv1 (66 aa).

The region spanning 1–66 is the LCN-type CS-alpha/beta domain; it reads KEGYIVNLST…VWPLPKKTCN (66 aa). Cystine bridges form between cysteine 12-cysteine 65, cysteine 16-cysteine 41, cysteine 25-cysteine 46, and cysteine 29-cysteine 48.

As to expression, expressed by the venom gland.

The protein localises to the secreted. Is susceptible to be neutralized by human antibodies scFvs 10FG2 and HV. Its function is as follows. Beta toxins bind voltage-independently at site-4 of sodium channels (Nav) and reduces peak current and shifts the voltage of activation toward more negative potentials thereby affecting sodium channel activation and promoting spontaneous and repetitive firing. This toxin is slightly toxic to mice. The polypeptide is Beta-mammal toxin Cv1 (Centruroides villegasi (Scorpion)).